The sequence spans 429 residues: Histidinol dehydrogenase (429 aa).

NAD(+)-binding residues include Tyr-130, Gln-191, and Asn-214. Residues Ser-237, Gln-259, and His-262 each coordinate substrate. The Zn(2+) site is built by Gln-259 and His-262. Catalysis depends on proton acceptor residues Glu-327 and His-328. His-328, Asp-361, Glu-415, and His-420 together coordinate substrate. A Zn(2+)-binding site is contributed by Asp-361. His-420 contacts Zn(2+).

It belongs to the histidinol dehydrogenase family. The cofactor is Zn(2+).

The catalysed reaction is L-histidinol + 2 NAD(+) + H2O = L-histidine + 2 NADH + 3 H(+). Its pathway is amino-acid biosynthesis; L-histidine biosynthesis; L-histidine from 5-phospho-alpha-D-ribose 1-diphosphate: step 9/9. Functionally, catalyzes the sequential NAD-dependent oxidations of L-histidinol to L-histidinaldehyde and then to L-histidine. This is Histidinol dehydrogenase from Geobacter sulfurreducens (strain ATCC 51573 / DSM 12127 / PCA).